The following is a 104-amino-acid chain: Colipase-like protein 2 (104 aa).

An N-terminal signal peptide occupies residues M1 to P19. Cystine bridges form between C38–C49, C44–C60, C48–C82, C70–C90, and C84–C101.

Belongs to the colipase family.

The protein resides in the secreted. The chain is Colipase-like protein 2 (Clpsl2) from Rattus norvegicus (Rat).